We begin with the raw amino-acid sequence, 795 residues long: Delta-1-pyrroline-5-carboxylate synthase (795 aa).

Positions 1 to 361 (MLSQVYRYGF…FFSEVKPAGP (361 aa)) are glutamate 5-kinase. 3 residues coordinate substrate: Ser117, Asp223, and Asn246. ATP contacts are provided by residues 266–267 (SD) and 305–311 (MGGMEAK). Lys311, Lys347, and Lys550 each carry N6-succinyllysine. Residues 362–795 (TVEQQGEMAR…NLPIPQRNTN (434 aa)) form a gamma-glutamyl phosphate reductase region.

In the N-terminal section; belongs to the glutamate 5-kinase family. The protein in the C-terminal section; belongs to the gamma-glutamyl phosphate reductase family. In terms of assembly, can form homodimers/multimers.

It is found in the mitochondrion matrix. The catalysed reaction is L-glutamate + ATP = L-glutamyl 5-phosphate + ADP. It carries out the reaction L-glutamate 5-semialdehyde + phosphate + NADP(+) = L-glutamyl 5-phosphate + NADPH + H(+). It participates in amino-acid biosynthesis; L-proline biosynthesis; L-glutamate 5-semialdehyde from L-glutamate: step 1/2. It functions in the pathway amino-acid biosynthesis; L-proline biosynthesis; L-glutamate 5-semialdehyde from L-glutamate: step 2/2. Its function is as follows. Bifunctional enzyme that converts glutamate to glutamate 5-semialdehyde, an intermediate in the biosynthesis of proline, ornithine and arginine. In Pongo abelii (Sumatran orangutan), this protein is Delta-1-pyrroline-5-carboxylate synthase (ALDH18A1).